Consider the following 300-residue polypeptide: Acetaldehyde dehydrogenase 1 (300 aa).

11–14 (SGNI) lines the NAD(+) pocket. Residue cysteine 126 is the Acyl-thioester intermediate of the active site. Residues 157–165 (SAGPGTRAN) and asparagine 276 each bind NAD(+).

This sequence belongs to the acetaldehyde dehydrogenase family.

It catalyses the reaction acetaldehyde + NAD(+) + CoA = acetyl-CoA + NADH + H(+). This chain is Acetaldehyde dehydrogenase 1, found in Rhodococcus erythropolis (strain PR4 / NBRC 100887).